A 295-amino-acid chain; its full sequence is Tissue factor (295 aa).

A signal peptide spans methionine 1 to alanine 32. Residues serine 33–glutamate 251 are Extracellular-facing. Short sequence motifs (WKS motif) lie at residues tryptophan 46 to serine 48 and tryptophan 77 to serine 79. A disulfide bridge connects residues cysteine 81 and cysteine 89. Asparagine 156 and asparagine 169 each carry an N-linked (GlcNAc...) asparagine glycan. The short motif at tryptophan 190–serine 192 is the WKS motif element. A disulfide bridge links cysteine 218 with cysteine 241. A helical transmembrane segment spans residues isoleucine 252–leucine 274. Over histidine 275–serine 295 the chain is Cytoplasmic. Cysteine 277 is lipidated: S-palmitoyl cysteine.

The protein belongs to the tissue factor family. As to quaternary structure, interacts with HSPE; the interaction, inhibited by heparin, promotes the generation of activated factor X and activates coagulation in the presence of activated factor VII. In terms of tissue distribution, lung, placenta and pancreas.

It localises to the membrane. It is found in the secreted. Initiates blood coagulation by forming a complex with circulating factor VII or VIIa. The [TF:VIIa] complex activates factors IX or X by specific limited proteolysis. TF plays a role in normal hemostasis by initiating the cell-surface assembly and propagation of the coagulation protease cascade. This is Tissue factor (F3) from Homo sapiens (Human).